The following is a 101-amino-acid chain: NAD(P)H-quinone oxidoreductase subunit 4L, chloroplastic (101 aa).

3 helical membrane-spanning segments follow: residues 2 to 22 (MLEH…YGLI), 32 to 52 (MCLE…SDFF), and 61 to 81 (IFSI…SAIV).

It belongs to the complex I subunit 4L family. NDH is composed of at least 16 different subunits, 5 of which are encoded in the nucleus.

It localises to the plastid. Its subcellular location is the chloroplast thylakoid membrane. The enzyme catalyses a plastoquinone + NADH + (n+1) H(+)(in) = a plastoquinol + NAD(+) + n H(+)(out). It catalyses the reaction a plastoquinone + NADPH + (n+1) H(+)(in) = a plastoquinol + NADP(+) + n H(+)(out). NDH shuttles electrons from NAD(P)H:plastoquinone, via FMN and iron-sulfur (Fe-S) centers, to quinones in the photosynthetic chain and possibly in a chloroplast respiratory chain. The immediate electron acceptor for the enzyme in this species is believed to be plastoquinone. Couples the redox reaction to proton translocation, and thus conserves the redox energy in a proton gradient. In Gossypium barbadense (Sea Island cotton), this protein is NAD(P)H-quinone oxidoreductase subunit 4L, chloroplastic.